A 63-amino-acid polypeptide reads, in one-letter code: Putative conjugal transfer lipoprotein XF_a0011.1 (63 aa).

Residues 1-15 form the signal peptide; the sequence is MRYTFGIVTVYLLAG. Cys16 carries N-palmitoyl cysteine lipidation. Residue Cys16 is the site of S-diacylglycerol cysteine attachment.

It to B.suis ORF12 in VirB region.

Its subcellular location is the cell inner membrane. This is Putative conjugal transfer lipoprotein XF_a0011.1 from Xylella fastidiosa (strain 9a5c).